Consider the following 296-residue polypeptide: Ribosomal protein L11 methyltransferase (296 aa).

Residues Thr147, Gly168, Asp190, and Asn232 each coordinate S-adenosyl-L-methionine.

The protein belongs to the methyltransferase superfamily. PrmA family.

Its subcellular location is the cytoplasm. It carries out the reaction L-lysyl-[protein] + 3 S-adenosyl-L-methionine = N(6),N(6),N(6)-trimethyl-L-lysyl-[protein] + 3 S-adenosyl-L-homocysteine + 3 H(+). Its function is as follows. Methylates ribosomal protein L11. This is Ribosomal protein L11 methyltransferase from Marinomonas sp. (strain MWYL1).